A 126-amino-acid chain; its full sequence is Aspartate 1-decarboxylase (126 aa).

The active-site Schiff-base intermediate with substrate; via pyruvic acid is the Ser25. Pyruvic acid (Ser) is present on Ser25. Substrate is bound at residue Thr57. The active-site Proton donor is Tyr58. 73 to 75 contributes to the substrate binding site; the sequence is GAA.

This sequence belongs to the PanD family. Heterooctamer of four alpha and four beta subunits. It depends on pyruvate as a cofactor. Post-translationally, is synthesized initially as an inactive proenzyme, which is activated by self-cleavage at a specific serine bond to produce a beta-subunit with a hydroxyl group at its C-terminus and an alpha-subunit with a pyruvoyl group at its N-terminus.

It localises to the cytoplasm. The catalysed reaction is L-aspartate + H(+) = beta-alanine + CO2. It participates in cofactor biosynthesis; (R)-pantothenate biosynthesis; beta-alanine from L-aspartate: step 1/1. In terms of biological role, catalyzes the pyruvoyl-dependent decarboxylation of aspartate to produce beta-alanine. The polypeptide is Aspartate 1-decarboxylase (Pseudomonas fluorescens).